We begin with the raw amino-acid sequence, 423 residues long: Galactosylceramide sulfotransferase (423 aa).

At 1 to 14 (MPLPQKKRWESMAK) the chain is on the cytoplasmic side. A helical; Signal-anchor for type II membrane protein transmembrane segment spans residues 15-35 (GLVLGALFTSFLLLLYSYAVP). Residues 36–423 (PLYTGLASTT…WKFIRDFLRW (388 aa)) are Lumenal-facing. The segment at 48–70 (GAAPCSPAPREPEAPTSANGSAG) is disordered. N-linked (GlcNAc...) asparagine glycosylation is found at asparagine 66, asparagine 156, and asparagine 312.

The protein belongs to the galactose-3-O-sulfotransferase family.

It is found in the golgi apparatus membrane. It catalyses the reaction a beta-D-galactosyl-(1&lt;-&gt;1')-N-acylsphing-4-enine + 3'-phosphoadenylyl sulfate = an N-acyl-1-beta-D-(3-O-sulfo)-galactosyl-sphing-4-enine + adenosine 3',5'-bisphosphate + H(+). It carries out the reaction a 1-O-alkyl-2-acyl-3-O-(beta-D-galactosyl)-sn-glycerol + 3'-phosphoadenylyl sulfate = a 1-O-alkyl-2-acyl-3-(beta-D-3-sulfogalactosyl)-sn-glycerol + adenosine 3',5'-bisphosphate + H(+). The catalysed reaction is a beta-D-Gal-(1&lt;-&gt;1')-ceramide + 3'-phosphoadenylyl sulfate = 1-(3-O-sulfo-beta-D-galactosyl)-ceramide + adenosine 3',5'-bisphosphate + H(+). The enzyme catalyses a 1,2-diacyl-3-O-(beta-D-galactosyl)-sn-glycerol + 3'-phosphoadenylyl sulfate = 1,2-diacyl-3-(3-O-sulfo-beta-D-galactosyl)-sn-glycerol + adenosine 3',5'-bisphosphate + H(+). It catalyses the reaction a beta-D-Gal-(1-&gt;4)-beta-D-Glc-(1&lt;-&gt;1)-Cer(d18:1(4E)) + 3'-phosphoadenylyl sulfate = beta-D-3-sulfogalactosyl-(1-&gt;4)-beta-D-glucosyl-(1&lt;-&gt;1')-N-acylsphing-4-enine + adenosine 3',5'-bisphosphate + H(+). Its pathway is lipid metabolism; sphingolipid metabolism. Catalyzes the transfer of a sulfate group to position 3 of non-reducing beta-galactosyl residues in glycerolipids and sphingolipids, therefore participates in the biosynthesis of sulfoglycolipids. Catalyzes the synthesis of galactosylceramide sulfate (sulfatide), a major lipid component of the myelin sheath and of monogalactosylalkylacylglycerol sulfate (seminolipid), present in spermatocytes. Seems to prefer beta-glycosides at the non-reducing termini of sugar chains attached to a lipid moiety. Also acts on lactosylceramide, galactosyl 1-alkyl-2-sn-glycerol and galactosyl diacylglycerol (in vitro). This Bos taurus (Bovine) protein is Galactosylceramide sulfotransferase.